Consider the following 125-residue polypeptide: MAQKKRKERRYVPYGVAHIHSTFNNTIITITDPNGAVLAWASGGFFFKGTRKGTPYAAQLASESVAKKVQQTYGMKEIDVFVKGPGPGRETAIRALQAVGLDVKSIKDVTPIPHNGCRPPKARRV.

It belongs to the universal ribosomal protein uS11 family. Part of the 30S ribosomal subunit. Interacts with proteins S7 and S18. Binds to IF-3.

Located on the platform of the 30S subunit, it bridges several disparate RNA helices of the 16S rRNA. Forms part of the Shine-Dalgarno cleft in the 70S ribosome. The chain is Small ribosomal subunit protein uS11 from Coprothermobacter proteolyticus (strain ATCC 35245 / DSM 5265 / OCM 4 / BT).